The following is a 560-amino-acid chain: Beta-hexosaminidase subunit B1 (560 aa).

Residues 1–25 form the signal peptide; that stretch reads MIILKRNIVFLLIIIIVLGIFIATS. 7 N-linked (GlcNAc...) asparagine glycosylation sites follow: N59, N69, N81, N99, N161, N293, and N346. Catalysis depends on E359, which acts as the Proton donor. Residues N366, N436, N472, and N547 are each glycosylated (N-linked (GlcNAc...) asparagine).

This sequence belongs to the glycosyl hydrolase 20 family.

It is found in the lysosome. The enzyme catalyses Hydrolysis of terminal non-reducing N-acetyl-D-hexosamine residues in N-acetyl-beta-D-hexosaminides.. Functionally, responsible for the degradation of GM2 gangliosides, and a variety of other molecules containing terminal N-acetyl hexosamines. The chain is Beta-hexosaminidase subunit B1 (hexb1) from Dictyostelium discoideum (Social amoeba).